The sequence spans 424 residues: MHRKHLQEIPDQSGNVTTSFTWGWDSSKTSELLSGMGVSALEKEEVDSENIPHGLLSNLGHPQSPPRKRVKGKGSDKDFVIIRRPKLSRENFPGVSWDSLPDELLLGIFSCLCLPELLRVSGVCKRWYRLSLDESLWQSLDLAGKNLHPDVTVRLLSRGVVAFRCPRSFMEQPLGESFSSFRVQHMDLSNSVINVSNLHKILSECSKLQNLSLEGLQLSDPIVKTLAQNENLVRLNLCGCSGFSESAVATLLSSCSRLDELNLSWCFDFTEKHVQAAVAHLPNTITQLNLSGYRKNLQKTDLCTIIKRCPNLIRLDLSDSIMLKNDCFPEFFQLNYLQHLSLSRCYDIIPDTLLELGEIPTLKTLQVFGIVPEGTLQLLREALPRLQINCAYFTTIARPTMDSKKNLEIWGIKCRLTLQKPSCL.

The tract at residues 52–73 (PHGLLSNLGHPQSPPRKRVKGK) is disordered. Ser-64 is subject to Phosphoserine. Positions 67–73 (RKRVKGK) match the Nuclear localization signal motif. Lys-68 and Lys-71 each carry N6-acetyllysine; by p300/EP300. Ser-75 is subject to Phosphoserine. Positions 94–140 (GVSWDSLPDELLLGIFSCLCLPELLRVSGVCKRWYRLSLDESLWQSL) constitute an F-box domain. 10 LRR repeats span residues 151–176 (VTVRLLSRGVVAFRCPRSFMEQPLGE), 177–204 (SFSSFRVQHMDLSNSVINVSNLHKILSE), 210–234 (NLSLEGLQLSDPIVKTLAQNENLVR), 235–257 (LNLCGCSGFSESAVATLLSSCSR), 258–284 (LDELNLSWCFDFTEKHVQAAVAHLPNT), 286–308 (TQLNLSGYRKNLQKTDLCTIIKR), 309–330 (CPNLIRLDLSDSIMLKNDCFPE), 334–356 (LNYLQHLSLSRCYDIIPDTLLEL), 359–378 (IPTLKTLQVFGIVPEGTLQL), and 380–401 (REALPRLQINCAYFTTIARPTM). Ser-179 bears the Phosphoserine mark.

As to quaternary structure, part of a SCF(SKP2) complex consisting of CUL1, RBX1, SKP1 and SKP2. Component of a SCF(SKP2)-like complex containing CUL1, SKP1, TRIM21 and SKP2. Interacts directly with CUL1 and SKP1. Interacts with ASB2 which is the substrate-recognition component of a probable ECS E3 ubiquitin-protein ligase complex; ASB2 is likely to bridge the formation of dimeric E3-ubiquitin-protein ligase complexes composed of an ECS complex and an SCF(SKP2) complex. Interacts with CKS1. Interacts with the cyclin-A-CDK2 complex. Interacts with ORC1, phosphorylated CDT1, phosphorylated RBL2, ELF4, phosphorylated RAG2, FOXO1, UBP43, MYC, TOB1, TAL1 and KMT2A/MLL1. Interacts with TRIM21. Interacts with cyclin-E. Interacts with CARM1. In terms of processing, phosphorylated on serine and threonine resudues in response to DNA damage, promoting 'Lys-63'-linked ubiquitination of NBN. Post-translationally, ubiquitinated by the APC/C complex, leading to its degradation by the proteasome. Deubiquitinated by USP13. Acetylation at Lys-68 and Lys-71 increases stability through impairment of APC/C-mediated proteolysis and promotes cytoplasmic retention. Deacetylated by SIRT3.

The protein resides in the cytoplasm. The protein localises to the nucleus. It participates in protein modification; protein ubiquitination. Substrate recognition component of a SCF (SKP1-CUL1-F-box protein) E3 ubiquitin-protein ligase complex which mediates the ubiquitination and subsequent proteasomal degradation of target proteins involved in cell cycle progression, signal transduction and transcription. Specifically recognizes phosphorylated CDKN1B/p27kip and is involved in regulation of G1/S transition. Degradation of CDKN1B/p27kip also requires CKS1. Recognizes target proteins ORC1, CDT1, RBL2, KMT2A/MLL1, CDK9, RAG2, NBN, FOXO1, UBP43, YTHDF2, and probably MYC, TOB1 and TAL1. Degradation of TAL1 also requires STUB1. Recognizes CDKN1A in association with CCNE1 or CCNE2 and CDK2. Promotes ubiquitination and destruction of CDH1 in a CK1-dependent manner, thereby regulating cell migration. Following phosphorylation in response to DNA damage, mediates 'Lys-63'-linked ubiquitination of NBN, promoting ATM recruitment to DNA damage sites and DNA repair via homologous recombination. In terms of biological role, through the ubiquitin-mediated proteasomal degradation of viral proteins may have an antiviral activity. In Mus musculus (Mouse), this protein is S-phase kinase-associated protein 2 (Skp2).